Here is a 374-residue protein sequence, read N- to C-terminus: Tuliposide A-converting enzyme b3, amyloplastic (374 aa).

Residues Met1–Thr68 constitute an amyloplast transit peptide. The active-site Acyl-ester intermediate is the Ser226. Active-site charge relay system residues include Asp316 and His348.

Belongs to the AB hydrolase superfamily. In terms of assembly, homodimer. Highly expressed in pistil and bulb scales. Lower expression in stem, and barely detected in root, leaf, petal and stamen.

Its subcellular location is the plastid. It localises to the amyloplast. The catalysed reaction is 6-tuliposide A = tulipalin A + D-glucose. Functionally, lactone-forming carboxylesterases, specifically catalyzing intramolecular transesterification, but not hydrolysis. Involved in the biosynthesis of tulipalins, defensive chemicals that show antimicrobial activities against a broad range of strains of bacteria and fungi. Substrates are 6-tuliposide A &gt; 6-tuliposide B. This Tulipa gesneriana (Garden tulip) protein is Tuliposide A-converting enzyme b3, amyloplastic (TCEA-B3).